Reading from the N-terminus, the 430-residue chain is C4-dicarboxylate transport protein (430 aa).

9 helical membrane passes run 8–28, 44–64, 76–96, 144–164, 184–204, 222–242, 289–309, 326–346, and 352–372; these read SLYF…HFYP, LIKM…IAGM, AALL…LVVV, AFAS…GFAL, VIFG…FGAM, LILC…GSIA, VVGL…SIYL, IWHQ…AAGV, and IVLA…LALI.

It belongs to the dicarboxylate/amino acid:cation symporter (DAACS) (TC 2.A.23) family.

The protein localises to the cell inner membrane. Responsible for the transport of dicarboxylates such as succinate, fumarate, and malate from the periplasm across the membrane. This chain is C4-dicarboxylate transport protein, found in Pectobacterium atrosepticum (strain SCRI 1043 / ATCC BAA-672) (Erwinia carotovora subsp. atroseptica).